We begin with the raw amino-acid sequence, 952 residues long: Serine/threonine-protein kinase atg1 (952 aa).

The Protein kinase domain occupies 23–329 (FTINEQIGKG…FPEYFAHPVV (307 aa)). Residues 29-37 (IGKGSFATV) and K52 contribute to the ATP site. Catalysis depends on D166, which acts as the Proton acceptor. 4 disordered regions span residues 331 to 478 (EPIP…EAEQ), 510 to 573 (GRAN…SSPS), 783 to 806 (RLPEDHPGHPNNRSTASRLVGGSS), and 920 to 952 (AIAKHQSMPPPSSSPRRSYSGGTTPTINNTPPK). 2 stretches are compositionally biased toward basic and acidic residues: residues 338 to 347 (GDDRPKEKSP) and 356 to 372 (SLRDRQRESPTVKHIDT). Over residues 386 to 398 (SPRTPNIESNQPF) the composition is skewed to polar residues. The segment covering 429 to 439 (PRQRDRKDRTE) has biased composition (basic and acidic residues). Polar residues-rich tracts occupy residues 459–475 (ANLQPKNEVQSSNSITE), 553–573 (PDTSSARNSYGSYGKTGSSPS), and 793–806 (NNRSTASRLVGGSS). The span at 933 to 952 (SPRRSYSGGTTPTINNTPPK) shows a compositional bias: low complexity.

This sequence belongs to the protein kinase superfamily. Ser/Thr protein kinase family. APG1/unc-51/ULK1 subfamily. Homodimer. Forms a ternary complex with ATG13 and ATG17.

Its subcellular location is the cytoplasm. The protein resides in the preautophagosomal structure membrane. The catalysed reaction is L-seryl-[protein] + ATP = O-phospho-L-seryl-[protein] + ADP + H(+). It carries out the reaction L-threonyl-[protein] + ATP = O-phospho-L-threonyl-[protein] + ADP + H(+). In terms of biological role, serine/threonine protein kinase involved in the cytoplasm to vacuole transport (Cvt) and found to be essential in autophagy, where it is required for the formation of autophagosomes. Involved in the clearance of protein aggregates which cannot be efficiently cleared by the proteasome. Required for selective autophagic degradation of the nucleus (nucleophagy) as well as for mitophagy which contributes to regulate mitochondrial quantity and quality by eliminating the mitochondria to a basal level to fulfill cellular energy requirements and preventing excess ROS production. Also involved in endoplasmic reticulum-specific autophagic process, in selective removal of ER-associated degradation (ERAD) substrates. Plays a key role in ATG9 and ATG23 cycling through the pre-autophagosomal structure and is necessary to promote ATG18 binding to ATG9 through phosphorylation of ATG9. Catalyzes phosphorylation of ATG4, decreasing the interaction between ATG4 and ATG8 and impairing deconjugation of PE-conjugated forms of ATG8. In Botryotinia fuckeliana (strain B05.10) (Noble rot fungus), this protein is Serine/threonine-protein kinase atg1.